Consider the following 139-residue polypeptide: Ribulose bisphosphate carboxylase small subunit (139 aa).

It belongs to the RuBisCO small chain family. As to quaternary structure, heterohexadecamer of 8 large and 8 small subunits.

The protein localises to the plastid. It localises to the chloroplast. Its function is as follows. RuBisCO catalyzes two reactions: the carboxylation of D-ribulose 1,5-bisphosphate, the primary event in carbon dioxide fixation, as well as the oxidative fragmentation of the pentose substrate in the photorespiration process. Both reactions occur simultaneously and in competition at the same active site. Although the small subunit is not catalytic it is essential for maximal activity. The chain is Ribulose bisphosphate carboxylase small subunit from Pylaiella littoralis (Seaweed).